The sequence spans 280 residues: 2-dehydro-3-deoxyphosphooctonate aldolase (280 aa).

The protein belongs to the KdsA family.

It localises to the cytoplasm. It catalyses the reaction D-arabinose 5-phosphate + phosphoenolpyruvate + H2O = 3-deoxy-alpha-D-manno-2-octulosonate-8-phosphate + phosphate. It functions in the pathway carbohydrate biosynthesis; 3-deoxy-D-manno-octulosonate biosynthesis; 3-deoxy-D-manno-octulosonate from D-ribulose 5-phosphate: step 2/3. It participates in bacterial outer membrane biogenesis; lipopolysaccharide biosynthesis. In Neisseria gonorrhoeae (strain NCCP11945), this protein is 2-dehydro-3-deoxyphosphooctonate aldolase.